Reading from the N-terminus, the 155-residue chain is Glycosylation-dependent cell adhesion molecule 1 (155 aa).

The first 18 residues, 1 to 18 (MKFFAVLLLASLAATSLA), serve as a signal peptide directing secretion. Thr-34 is a glycosylation site (O-linked (GalNAc...) threonine). Phosphoserine occurs at positions 48, 53, 57, 59, and 65. Residues 74-109 (ARRHQNQNPKLLHPVPQESSFRNTATQSEETKELTP) form a disordered region. Residues 90-101 (QESSFRNTATQS) are compositionally biased toward polar residues.

Belongs to the PP3/GlyCAM-1 family. Highly expressed in whey fraction of camel milk.

This is Glycosylation-dependent cell adhesion molecule 1 (GLYCAM1) from Camelus dromedarius (Dromedary).